Here is a 177-residue protein sequence, read N- to C-terminus: Large ribosomal subunit protein uL6 (177 aa).

Belongs to the universal ribosomal protein uL6 family. As to quaternary structure, part of the 50S ribosomal subunit.

Its function is as follows. This protein binds to the 23S rRNA, and is important in its secondary structure. It is located near the subunit interface in the base of the L7/L12 stalk, and near the tRNA binding site of the peptidyltransferase center. This chain is Large ribosomal subunit protein uL6, found in Methylibium petroleiphilum (strain ATCC BAA-1232 / LMG 22953 / PM1).